Consider the following 156-residue polypeptide: Ribosomal RNA large subunit methyltransferase H (156 aa).

Residues leucine 73, glycine 104, and 123 to 128 (LSALTL) contribute to the S-adenosyl-L-methionine site.

This sequence belongs to the RNA methyltransferase RlmH family. Homodimer.

The protein localises to the cytoplasm. It catalyses the reaction pseudouridine(1915) in 23S rRNA + S-adenosyl-L-methionine = N(3)-methylpseudouridine(1915) in 23S rRNA + S-adenosyl-L-homocysteine + H(+). Functionally, specifically methylates the pseudouridine at position 1915 (m3Psi1915) in 23S rRNA. In Shewanella sediminis (strain HAW-EB3), this protein is Ribosomal RNA large subunit methyltransferase H.